A 415-amino-acid polypeptide reads, in one-letter code: Nacrein-like protein C2 (415 aa).

Residue Asn27 is glycosylated (N-linked (GlcNAc...) asparagine). The 382-residue stretch at Ala33–Phe414 folds into the Alpha-carbonic anhydrase domain. 3 residues coordinate Zn(2+): His132, His134, and His157. Positions Asp201–Arg297 are disordered. Residues Glu207–Asn219 are compositionally biased toward basic and acidic residues. Residues Asn220 to Glu289 show a composition bias toward low complexity. 22 consecutive repeat copies span residues Gly225 to Asn227, Gly228 to Asn230, Gly231 to Asn233, Gly234 to Asn236, Gly237 to Asn239, Gly240 to Asn242, Gly243 to Asn245, Gly246 to Asn248, Gly249 to Asn251, Gly252 to Asn254, Gly255 to Asn257, Gly258 to Asn260, Gly261 to Asn263, Gly264 to Asn266, Gly267 to Asn269, Gly270 to Asn272, Gly273 to Asn275, Gly276 to Asn278, Gly279 to Asn281, Gly282 to Asn284, Gly285 to Asn286, and Gly288 to Asn290. The interval Gly225–Asn290 is 27 X 3 AA approximate tandem repeats of G-X-N. Thr355–Thr356 contributes to the substrate binding site.

Belongs to the alpha-carbonic anhydrase family. As to quaternary structure, homooligomer; disulfide-linked. May also be disulfide-linked to insoluble organic matrix. It depends on Zn(2+) as a cofactor. As to expression, expressed in the mantle.

It is found in the secreted. The protein resides in the extracellular space. It localises to the extracellular matrix. The enzyme catalyses hydrogencarbonate + H(+) = CO2 + H2O. Its function is as follows. Acts as a negative regulator for calcification in the shells of mollusks. May function both as a calcium concentrator and as a carbonic anhydrase required for production of carbonate ions, which are assembled to CaCO(3) at mineralization sites. Is important for shell formation in both the calcitic prismatic layer and the aragonitic nacreous layer. Shows inhibitory activity of crystal formation when present in free state but, when attached to the insoluble matrix, may regulate the form and size of aragonite crystal. The chain is Nacrein-like protein C2 from Crassostrea nippona (Iwagaki oyster).